A 112-amino-acid polypeptide reads, in one-letter code: Nitrogen regulatory protein P-II (112 aa).

A Phosphoserine modification is found at serine 49. O-UMP-tyrosine is present on tyrosine 51.

The protein belongs to the P(II) protein family. Homotrimer. Phosphorylation dependent on the nitrogen source and spectral light quality.

P-II indirectly controls the transcription of the GS gene (glnA). P-II prevents NR-II-catalyzed conversion of NR-I to NR-I-phosphate, the transcriptional activator of glnA. When P-II is phosphorylated, these events are reversed. In nitrogen-limiting conditions, when the ratio of Gln to 2-ketoglutarate decreases, P-II is phosphorylated which allows the deadenylation of glutamine synthetase (GS), thus activating the enzyme. This is Nitrogen regulatory protein P-II (glnB) from Nostoc punctiforme (strain ATCC 29133 / PCC 73102).